The primary structure comprises 1835 residues: AT-rich interactive domain-containing protein 2 (1835 aa).

Ala2 carries the N-acetylalanine modification. Phosphoserine is present on Ser4. Glycyl lysine isopeptide (Lys-Gly) (interchain with G-Cter in SUMO2) cross-links involve residues Lys7, Lys15, and Lys119. One can recognise an ARID domain in the interval 13–105 (RRKGLAFLDE…YLEKYEKVHH (93 aa)). Residues 313-317 (LRFLL) carry the LXXLL motif. Positions 524 to 603 (ACQWLNAHFE…IHVVGVKRRA (80 aa)) form a DNA-binding region, RFX-type winged-helix. Lys555 participates in a covalent cross-link: Glycyl lysine isopeptide (Lys-Gly) (interchain with G-Cter in SUMO2). A phosphoserine mark is found at Ser631 and Ser635. A Phosphothreonine modification is found at Thr653. Phosphoserine is present on Ser689. Thr692 carries the post-translational modification Phosphothreonine. 5 disordered regions span residues 819-844 (QQLI…QSQD), 962-1057 (LTGQ…SGES), 1266-1287 (MENP…KENE), 1295-1314 (NGRK…KIQS), and 1321-1341 (LISN…KQNS). 3 stretches are compositionally biased toward low complexity: residues 823–843 (TTSP…SQSQ), 985–996 (PTAMSSSSTPQS), and 1025–1044 (QVQV…QPQQ). Ser1300 is subject to Phosphoserine. Positions 1301-1314 (DSSLPPSNSGKIQS) are enriched in polar residues. Phosphoserine occurs at positions 1391 and 1496. Disordered regions lie at residues 1488-1522 (DSGS…AEDT) and 1572-1629 (SAVQ…RKPG). Polar residues predominate over residues 1491–1509 (SKVSHSPALSSDVRSTNGT). Basic and acidic residues predominate over residues 1513–1522 (KTVKRPAEDT). The span at 1573-1592 (AVQQKQQHPPTYVQNVVPQN) shows a compositional bias: polar residues. The span at 1602–1623 (QVQGQPNSSQPSPFSGSSQPGD) shows a compositional bias: low complexity. Residues 1632–1657 (FMCLWQSCKKWFQTPSQVFYHAATEH) form a C2H2-type zinc finger. Glycyl lysine isopeptide (Lys-Gly) (interchain with G-Cter in SUMO2) cross-links involve residues Lys1701, Lys1716, and Lys1731. Residues 1703–1728 (DEPGQAGSQKSSTKQPTVGGTSSTPR) form a disordered region. Residues 1708-1728 (AGSQKSSTKQPTVGGTSSTPR) show a composition bias toward polar residues.

Component of the SWI/SNF-B (PBAF) chromatin remodeling complex, at least composed of SMARCA4/BRG1, SMARCB1/BAF47/SNF5, ACTL6A/BAF53A or ACTL6B/BAF53B, SMARCE1/BAF57, SMARCD1/BAF60A, SMARCD2/BAF60B, perhaps SMARCD3/BAF60C, SMARCC1/BAF155, SMARCC2/BAF170, PBRM1/BAF180, ARID2/BAF200 and actin. Interacts with SRF. Forms complexes with SRF and SRF cofactors MYOCD, NKX2-5 and SRFBP1. In terms of tissue distribution, highly expressed in heart.

It localises to the nucleus. Its function is as follows. Involved in transcriptional activation and repression of select genes by chromatin remodeling (alteration of DNA-nucleosome topology). Required for the stability of the SWI/SNF chromatin remodeling complex SWI/SNF-B (PBAF). May be involved in targeting the complex to different genes. May be involved in regulating transcriptional activation of cardiac genes. The chain is AT-rich interactive domain-containing protein 2 from Homo sapiens (Human).